Reading from the N-terminus, the 500-residue chain is Probable cytosol aminopeptidase (500 aa).

The Mn(2+) site is built by Lys265 and Asp270. Lys277 is an active-site residue. The Mn(2+) site is built by Asp288, Asp347, and Glu349. Arg351 is an active-site residue.

This sequence belongs to the peptidase M17 family. Mn(2+) is required as a cofactor.

Its subcellular location is the cytoplasm. The enzyme catalyses Release of an N-terminal amino acid, Xaa-|-Yaa-, in which Xaa is preferably Leu, but may be other amino acids including Pro although not Arg or Lys, and Yaa may be Pro. Amino acid amides and methyl esters are also readily hydrolyzed, but rates on arylamides are exceedingly low.. It catalyses the reaction Release of an N-terminal amino acid, preferentially leucine, but not glutamic or aspartic acids.. In terms of biological role, presumably involved in the processing and regular turnover of intracellular proteins. Catalyzes the removal of unsubstituted N-terminal amino acids from various peptides. The polypeptide is Probable cytosol aminopeptidase (Corynebacterium glutamicum (strain ATCC 13032 / DSM 20300 / JCM 1318 / BCRC 11384 / CCUG 27702 / LMG 3730 / NBRC 12168 / NCIMB 10025 / NRRL B-2784 / 534)).